The primary structure comprises 207 residues: ATP synthase subunit a (207 aa).

The next 6 helical transmembrane spans lie at 3–23 (QHVI…TIFA), 62–82 (LIAS…IPGL), 88–108 (NLNT…FEGI), 119–139 (FLGP…LSHL), 158–178 (LISV…VMLI), and 180–200 (LIAV…YIAG).

The protein belongs to the ATPase A chain family. In terms of assembly, F-type ATPases have 2 components, CF(1) - the catalytic core - and CF(0) - the membrane proton channel. CF(1) has five subunits: alpha(3), beta(3), gamma(1), delta(1), epsilon(1). CF(0) has three main subunits: a(1), b(2) and c(9-12). The alpha and beta chains form an alternating ring which encloses part of the gamma chain. CF(1) is attached to CF(0) by a central stalk formed by the gamma and epsilon chains, while a peripheral stalk is formed by the delta and b chains.

It localises to the cell inner membrane. Functionally, key component of the proton channel; it plays a direct role in the translocation of protons across the membrane. The sequence is that of ATP synthase subunit a from Sulfurihydrogenibium sp. (strain YO3AOP1).